The primary structure comprises 390 residues: Olfactomedin-like protein 3A (390 aa).

The N-terminal stretch at 1-17 (MRALQLLVLVLSGLVGA) is a signal peptide. Residues 18–91 (QQQALMDYLE…RVDRVEREMD (74 aa)) adopt a coiled-coil conformation. The 257-residue stretch at 130–386 (DCSDMISSIK…QILYKLQLKK (257 aa)) folds into the Olfactomedin-like domain. Cysteine 131 and cysteine 313 are joined by a disulfide. Asparagine 169 carries an N-linked (GlcNAc...) asparagine glycan.

This sequence belongs to the OLFML3 family.

The protein resides in the secreted. Secreted scaffold protein that plays an essential role in dorsoventral patterning during early development. Stabilizes axial formation by restricting chordin (CHRD) activity on the dorsal side. Acts by facilitating the association between the tolloid proteases and their substrate chordin (CHRD), leading to enhance chordin (CHRD) degradation. The protein is Olfactomedin-like protein 3A (olfml3a) of Danio rerio (Zebrafish).